The following is a 318-amino-acid chain: Methionyl-tRNA formyltransferase (318 aa).

Ser-112 to Pro-115 is a binding site for (6S)-5,6,7,8-tetrahydrofolate.

Belongs to the Fmt family.

The catalysed reaction is L-methionyl-tRNA(fMet) + (6R)-10-formyltetrahydrofolate = N-formyl-L-methionyl-tRNA(fMet) + (6S)-5,6,7,8-tetrahydrofolate + H(+). Attaches a formyl group to the free amino group of methionyl-tRNA(fMet). The formyl group appears to play a dual role in the initiator identity of N-formylmethionyl-tRNA by promoting its recognition by IF2 and preventing the misappropriation of this tRNA by the elongation apparatus. In Shewanella frigidimarina (strain NCIMB 400), this protein is Methionyl-tRNA formyltransferase.